A 102-amino-acid chain; its full sequence is 10 kDa heat shock protein, mitochondrial (102 aa).

The protein belongs to the GroES chaperonin family. Homohexamer.

The protein localises to the mitochondrion matrix. Its function is as follows. Eukaryotic CPN10 homolog which is essential for mitochondrial protein biogenesis, together with CPN60. Binds to CPN60 in the presence of Mg-ATP and suppresses the ATPase activity of the latter. This Schistosoma japonicum (Blood fluke) protein is 10 kDa heat shock protein, mitochondrial.